Reading from the N-terminus, the 271-residue chain is tRNA pseudouridine synthase A (271 aa).

The Nucleophile role is filled by Asp52. Tyr110 is a binding site for substrate.

It belongs to the tRNA pseudouridine synthase TruA family. As to quaternary structure, homodimer.

It carries out the reaction uridine(38/39/40) in tRNA = pseudouridine(38/39/40) in tRNA. Its function is as follows. Formation of pseudouridine at positions 38, 39 and 40 in the anticodon stem and loop of transfer RNAs. This is tRNA pseudouridine synthase A from Maridesulfovibrio salexigens (strain ATCC 14822 / DSM 2638 / NCIMB 8403 / VKM B-1763) (Desulfovibrio salexigens).